Consider the following 539-residue polypeptide: 3-methylmercaptopropionyl-CoA ligase (539 aa).

T185 is a Mg(2+) binding site. 5 residues coordinate ATP: H231, G303, H324, A325, and S329. Residue E330 participates in Mg(2+) binding. 4 residues coordinate ATP: Q359, D417, R432, and K523.

Belongs to the ATP-dependent AMP-binding enzyme family. Homodimer. The cofactor is Mg(2+).

It catalyses the reaction 3-(methylsulfanyl)propanoate + ATP + CoA = 3-(methylsulfanyl)propanoyl-CoA + AMP + diphosphate. It participates in lipid metabolism; fatty acid metabolism. With respect to regulation, activated by LiCl and NH(4)Cl. Inhibited by dimethylsulfoniopropionate (DMSP). MMPA concentrations above 2 mM relieve the DMSP inhibition and 80% of activity is regained at an MMPA concentration of 8 mM. Its function is as follows. Involved in the assimilation of dimethylsulphoniopropionate (DMSP), an important compound in the fixation of carbon in marine phytoplankton. Catalyzes the ATP-dependent ligation of methylmercaptopropionate (MMPA) and CoA to yield methylmercaptopropionate-CoA (MMPA-CoA). It is also active with short-chain-fatty-acid (carboxylic acids up to six carbons in length). This is 3-methylmercaptopropionyl-CoA ligase from Ruegeria pomeroyi (strain ATCC 700808 / DSM 15171 / DSS-3) (Silicibacter pomeroyi).